A 500-amino-acid polypeptide reads, in one-letter code: MIDLKKFEVWFVTGSQHLYGPETLEKVAEHSREIAGGLDATPQMPVRVVFKPVLTTADAVHELCREANNAAHCIGLVTWMHTFSPAKMWIAGLKALQKPFLHLHTQYNRELPWATIDMDFMNLNQAAHGDREFGFIGSRMRLDRKVVVGFWQDLEVISELGTWARAAAGWHDAQHLKVARFGDNMRNVAVTEGDKVQAKIQLAYSVDGFGVGDLVARIHAASDRDVDHLVSEYEDTYTLSEPLTAKGKQRASLLDAARIELGLRHFLKDGNFHAFTDTFEDLHGLNQLPGIAVQRLMADGYGFGAEGDWKTAALVRTMKVMAAGLDAGTSFMEDYTYHLENGGLVLGAHMLEICPSIASGKPSCEIHPLSIGGKGDPVRLVFDSQTGPAVVATIVDVGERFRMVINKVNVIPPEVPLPKLPVARAVWIPEPNLAVAAACWIYAGGAHHTGFSLCLTAQHLQDYAEMAGIECVLIDNDTTVHACKNELRWNDAYYRLTGWR.

Mn(2+)-binding residues include E306, E333, H349, and H448.

It belongs to the arabinose isomerase family. The cofactor is Mn(2+).

It catalyses the reaction beta-L-arabinopyranose = L-ribulose. It participates in carbohydrate degradation; L-arabinose degradation via L-ribulose; D-xylulose 5-phosphate from L-arabinose (bacterial route): step 1/3. In terms of biological role, catalyzes the conversion of L-arabinose to L-ribulose. The polypeptide is L-arabinose isomerase (Koribacter versatilis (strain Ellin345)).